Consider the following 354-residue polypeptide: Uroporphyrinogen decarboxylase (354 aa).

Substrate contacts are provided by residues 27–31 (RRAGR), Phe46, Asp77, Tyr154, Thr209, and His327.

This sequence belongs to the uroporphyrinogen decarboxylase family. In terms of assembly, homodimer.

Its subcellular location is the cytoplasm. It catalyses the reaction uroporphyrinogen III + 4 H(+) = coproporphyrinogen III + 4 CO2. Its pathway is porphyrin-containing compound metabolism; protoporphyrin-IX biosynthesis; coproporphyrinogen-III from 5-aminolevulinate: step 4/4. In terms of biological role, catalyzes the decarboxylation of four acetate groups of uroporphyrinogen-III to yield coproporphyrinogen-III. In Salmonella typhimurium (strain LT2 / SGSC1412 / ATCC 700720), this protein is Uroporphyrinogen decarboxylase.